The following is a 244-amino-acid chain: Mediator of RNA polymerase II transcription subunit 19 (244 aa).

2 disordered regions span residues 1–56 (MENF…PGAD) and 171–244 (PKKK…SSLR). Residues 26 to 47 (GKPPPPPPPPAGGGPGTAPPPT) are compositionally biased toward pro residues. A compositionally biased stretch (basic residues) spans 171–182 (PKKKNKHKHKQS). Ser194 carries the post-translational modification Phosphoserine. Residues 212–224 (KRKKKEKKKKKNR) show a composition bias toward basic residues. Ser226 is modified (phosphoserine). Residues 234–244 (SSQASSSSSLR) show a composition bias toward low complexity.

Belongs to the Mediator complex subunit 19 family. In terms of assembly, component of the Mediator complex, which is composed of MED1, MED4, MED6, MED7, MED8, MED9, MED10, MED11, MED12, MED13, MED13L, MED14, MED15, MED16, MED17, MED18, MED19, MED20, MED21, MED22, MED23, MED24, MED25, MED26, MED27, MED29, MED30, MED31, CCNC, CDK8 and CDC2L6/CDK11. The MED12, MED13, CCNC and CDK8 subunits form a distinct module termed the CDK8 module. Mediator containing the CDK8 module is less active than Mediator lacking this module in supporting transcriptional activation. Individual preparations of the Mediator complex lacking one or more distinct subunits have been variously termed ARC, CRSP, DRIP, PC2, SMCC and TRAP.

The protein resides in the nucleus. Component of the Mediator complex, a coactivator involved in the regulated transcription of nearly all RNA polymerase II-dependent genes. Mediator functions as a bridge to convey information from gene-specific regulatory proteins to the basal RNA polymerase II transcription machinery. Mediator is recruited to promoters by direct interactions with regulatory proteins and serves as a scaffold for the assembly of a functional preinitiation complex with RNA polymerase II and the general transcription factors. The sequence is that of Mediator of RNA polymerase II transcription subunit 19 (MED19) from Homo sapiens (Human).